We begin with the raw amino-acid sequence, 830 residues long: P-selectin (830 aa).

A signal peptide spans Met-1–Ala-41. Topologically, residues Trp-42–Ala-771 are extracellular. N-linked (GlcNAc...) asparagine glycosylation is found at Asn-54 and Asn-98. In terms of domain architecture, C-type lectin spans Lys-58–Cys-158. 23 disulfides stabilise this stretch: Cys-60–Cys-158, Cys-131–Cys-150, Cys-163–Cys-174, Cys-168–Cys-183, Cys-185–Cys-194, Cys-200–Cys-244, Cys-230–Cys-257, Cys-262–Cys-306, Cys-292–Cys-319, Cys-324–Cys-368, Cys-354–Cys-381, Cys-386–Cys-430, Cys-416–Cys-443, Cys-448–Cys-492, Cys-478–Cys-505, Cys-510–Cys-554, Cys-540–Cys-567, Cys-572–Cys-616, Cys-602–Cys-629, Cys-642–Cys-686, Cys-672–Cys-699, Cys-704–Cys-748, and Cys-734–Cys-761. Residues Glu-121, Asn-123, and Asn-124 each coordinate Ca(2+). Asn-123 provides a ligand contact to a carbohydrate. Residues Glu-133 and Asn-146 each contribute to the a carbohydrate site. Ca(2+) is bound by residues Asn-146 and Asp-147. The 37-residue stretch at Tyr-159–Glu-195 folds into the EGF-like domain. Residue Asn-180 is glycosylated (N-linked (GlcNAc...) asparagine). 9 consecutive Sushi domains span residues Arg-198–Ala-259, Ala-260–Ala-321, Val-322–Ala-383, Ile-384–Ala-445, Leu-446–Ala-507, Ile-508–Ala-569, Ile-570–Gly-631, Val-640–Ala-701, and Val-702–Ala-763. Residues Asn-212 and Asn-219 are each glycosylated (N-linked (GlcNAc...) asparagine). Asn-411 is a glycosylation site (N-linked (GlcNAc...) asparagine). N-linked (GlcNAc...) asparagine glycosylation is present at Asn-460. An N-linked (GlcNAc...) asparagine glycan is attached at Asn-518. Asn-665 is a glycosylation site (N-linked (GlcNAc...) asparagine). N-linked (GlcNAc...) asparagine glycans are attached at residues Asn-716, Asn-723, and Asn-741. The chain crosses the membrane as a helical span at residues Leu-772–Leu-795. At Arg-796–Pro-830 the chain is on the cytoplasmic side. The S-palmitoyl cysteine; alternate moiety is linked to residue Cys-807. The S-stearoyl cysteine; alternate moiety is linked to residue Cys-807. An Endocytosis signal motif is present at residues Tyr-818–Phe-821. The interaction with SNX17 stretch occupies residues Phe-821 to Pro-830.

This sequence belongs to the selectin/LECAM family. In terms of assembly, interacts with SNX17. Interacts with SELPLG/PSGL1 and PODXL2 and mediates neutrophil adhesion and leukocyte rolling. This interaction requires the sialyl-Lewis X epitope of SELPLG and PODXL2, and specific tyrosine sulfation on SELPLG. Interacts (via C-type lectin domain) with alpha-IIb/beta3 integrin ITGA2B:ITGB3 and alpha-V/beta-3 integrin ITGAV:ITGB3. Interacts with alpha5/beta1 integrin ITGA5:ITGB1 and alpha4/beta1 integrin ITGA4:ITGB. As to expression, stored in the alpha-granules of platelets and Weibel-Palade bodies of endothelial cells. Upon cell activation by agonists, P-selectin is transported rapidly to the cell surface.

The protein resides in the cell membrane. Functionally, ca(2+)-dependent receptor for myeloid cells that binds to carbohydrates on neutrophils and monocytes. Mediates the interaction of activated endothelial cells or platelets with leukocytes. The ligand recognized is sialyl-Lewis X. Mediates rapid rolling of leukocyte rolling over vascular surfaces during the initial steps in inflammation through interaction with SELPLG. Mediates cell-cell interactions and cell adhesion via the interaction with integrin alpha-IIb/beta3 (ITGA2B:ITGB3) and integrin alpha-V/beta-3 (ITGAV:ITGB3). The protein is P-selectin (SELP) of Homo sapiens (Human).